The following is an 817-amino-acid chain: Neurabin-2 (817 aa).

Actin-binding regions lie at residues 1–154 (MMKT…FERS) and 164–283 (EAAA…QHRV). Residues 1-165 (MMKTEPRGPG…PAAAGGDKEA (165 aa)) are disordered. Serine 15 and serine 17 each carry phosphoserine. A compositionally biased stretch (basic residues) spans 44 to 58 (GAHHKKYGSNVHRIK). Phosphoserine occurs at positions 94, 100, and 116. Residues 100 to 371 (SLNENVDHSA…PERGVGNGRA (272 aa)) are interaction with D(2) dopamine receptor. Over residues 131–141 (SAQPAPPPHPP) the composition is skewed to pro residues. An interaction with ADRA2A, ADRA2B and ADRA2C region spans residues 169–255 (RLLRQERAGL…KRSRVFQPPP (87 aa)). Residue serine 192 is modified to Phosphoserine. A Phosphothreonine modification is found at threonine 193. Serine 205 carries the post-translational modification Phosphoserine. At threonine 207 the chain carries Phosphothreonine. Residues 216 to 447 (EKADSRTGLH…SEEEDPAPSR (232 aa)) form a disordered region. Positions 252–261 (QPPPPPPPAP) are enriched in pro residues. The segment covering 291–302 (KPREVRKIKPVE) has biased composition (basic and acidic residues). Residues 333-342 (STVATAASPA) are compositionally biased toward low complexity. Positions 344 to 356 (EEPKAQAAPEKEA) are enriched in basic and acidic residues. The segment covering 410–425 (LEEDDEDDEEDGEPPY) has biased composition (acidic residues). The tract at residues 417-494 (DEEDGEPPYE…LEKRVERLEL (78 aa)) is interaction with protein phosphatase 1. A Phosphoserine modification is found at serine 438. The PP1-binding motif motif lies at 447–451 (RKIHF). The segment at 480 to 525 (SAEYELEKRVERLELFPVELEKDSEGLGISIIGMGAGADMGLEKLG) is interaction with RGS2. Positions 496–584 (PVELEKDSEG…RVRFMIGRER (89 aa)) constitute a PDZ domain. Residues 595–816 (IQQTLEQERW…NLQTLRNSNS (222 aa)) form an interaction with TGN38 region. At serine 658 the chain carries Phosphoserine. Residues 671 to 788 (FKELQIKHAV…QRRVLEESEL (118 aa)) are a coiled coil.

In terms of assembly, interacts with DCLK2. Possibly exists as a homodimer, homotrimer or a homotetramer. Interacts with F-actin, PPP1CA, neurabin-1, TGN38 and D(2) dopamine receptor. Interacts with RGS1, RGS2, RGS4, RGS19 and ADRA1B, ADRA2A, ADRA2B, ADRA2C, CDKN2A, PPP1R2, RASGFR1 and TIAM1. Interacts (via C-terminus) with SPATA13 (via C-terminal tail). Interacts with ADRA2B. Post-translationally, stimulation of D1 (but not D2) dopamine receptors induces Ser-94 phosphorylation. Dephosphorylation of Ser-94 is mediated mainly by PP1 and to a lesser extent by PP2A. Phosphorylation of spinophilin disrupts its association with F-actin, but does not affect its binding to PP1.

It localises to the cytoplasm. Its subcellular location is the cytoskeleton. The protein resides in the nucleus. It is found in the cell projection. The protein localises to the dendritic spine. It localises to the postsynaptic density. Its subcellular location is the synapse. The protein resides in the cell junction. It is found in the adherens junction. The protein localises to the cell membrane. It localises to the lamellipodium. Its subcellular location is the filopodium. The protein resides in the ruffle membrane. Functionally, seems to act as a scaffold protein in multiple signaling pathways. Modulates excitatory synaptic transmission and dendritic spine morphology. Binds to actin filaments (F-actin) and shows cross-linking activity. Binds along the sides of the F-actin. May play an important role in linking the actin cytoskeleton to the plasma membrane at the synaptic junction. Believed to target protein phosphatase 1/PP1 to dendritic spines, which are rich in F-actin, and regulates its specificity toward ion channels and other substrates, such as AMPA-type and NMDA-type glutamate receptors. Plays a role in regulation of G-protein coupled receptor signaling, including dopamine D2 receptors and alpha-adrenergic receptors. May establish a signaling complex for dopaminergic neurotransmission through D2 receptors by linking receptors downstream signaling molecules and the actin cytoskeleton. Binds to ADRA1B and RGS2 and mediates regulation of ADRA1B signaling. May confer to Rac signaling specificity by binding to both, RacGEFs and Rac effector proteins. Probably regulates p70 S6 kinase activity by forming a complex with TIAM1. Required for hepatocyte growth factor (HGF)-induced cell migration. The protein is Neurabin-2 (PPP1R9B) of Homo sapiens (Human).